Here is an 873-residue protein sequence, read N- to C-terminus: Bifunctional levopimaradiene synthase, chloroplastic (873 aa).

Residues 1-59 (MAGVLFANLPCSLQLSPKVPFRQSTNILIPFHKRSSFGFNAQHCVRSHLRLRWNCVGIH) constitute a chloroplast transit peptide. A substrate-binding site is contributed by Lys271. Mg(2+)-binding residues include Asp405 and Asp407. Positions 405 to 408 (DVDD) match the DXDD motif motif. A substrate-binding site is contributed by Lys492. Positions 624, 628, 769, 773, and 777 each coordinate Mg(2+). Positions 624 to 628 (DDLYD) match the DDXXD motif motif.

Belongs to the terpene synthase family. Tpsd subfamily. It depends on Mg(2+) as a cofactor. Expressed in roots.

It localises to the plastid. It is found in the chloroplast. It carries out the reaction (2E,6E,10E)-geranylgeranyl diphosphate = (+)-copalyl diphosphate. It catalyses the reaction (+)-copalyl diphosphate = abieta-8(14),12-diene + diphosphate. The protein operates within terpene metabolism; ginkgolide biosynthesis. Catalyzes the initial cyclization step in the biosynthesis of ginkgolides, a structurally unique family of diterpenoids that are highly specific platelet-activating-factor receptor antagonists. Bifunctional enzyme that catalyzes two sequential cyclizations of geranylgeranyl diphosphate (GGPP) to levopimaradiene. The sequence is that of Bifunctional levopimaradiene synthase, chloroplastic (LPS) from Ginkgo biloba (Ginkgo).